A 232-amino-acid chain; its full sequence is Ribonuclease 3 (232 aa).

An RNase III domain is found at 5-134; sequence NDAISKIIDY…LIGAIYIDGG (130 aa). Glu47 provides a ligand contact to Mg(2+). Asp51 is an active-site residue. Mg(2+)-binding residues include Asn120 and Glu123. Residue Glu123 is part of the active site. A DRBM domain is found at 159–228; sequence DPKTSLQEWT…AELMLEKIGK (70 aa).

The protein belongs to the ribonuclease III family. In terms of assembly, homodimer. Mg(2+) serves as cofactor.

It is found in the cytoplasm. It carries out the reaction Endonucleolytic cleavage to 5'-phosphomonoester.. In terms of biological role, digests double-stranded RNA. Involved in the processing of primary rRNA transcript to yield the immediate precursors to the large and small rRNAs (23S and 16S). Processes some mRNAs, and tRNAs when they are encoded in the rRNA operon. Processes pre-crRNA and tracrRNA of type II CRISPR loci if present in the organism. In Wolbachia pipientis wMel, this protein is Ribonuclease 3.